Reading from the N-terminus, the 113-residue chain is Replication initiation control protein YabA (113 aa).

Zn(2+) contacts are provided by H88, C90, C104, and C107.

The protein belongs to the YabA family. As to quaternary structure, homotetramer. Interacts with both DnaA and DnaN, acting as a bridge between these two proteins. The cofactor is Zn(2+).

Its subcellular location is the cytoplasm. The protein localises to the nucleoid. Involved in control of chromosome replication initiation. Inhibits the cooperative binding of DnaA to the oriC region, thus negatively regulating initiation of chromosome replication. Inhibits the ability of DnaA-ATP to form a helix on DNA; does not disassemble preformed DnaA-DNA helices. Decreases the residence time of DnaA on the chromosome at its binding sites (oriC, replication forks and promoter-binding sites). Tethers DnaA to the replication machinery via the DNA polymerase beta sliding clamp subunit (dnaN). Associates with oriC and other DnaA targets on the chromosome in a DnaA-dependent manner. This chain is Replication initiation control protein YabA, found in Staphylococcus saprophyticus subsp. saprophyticus (strain ATCC 15305 / DSM 20229 / NCIMB 8711 / NCTC 7292 / S-41).